A 355-amino-acid chain; its full sequence is DNA-directed RNA polymerase subunit alpha (355 aa).

The interval 1 to 233 (MVREKVRVST…DLFIPFLHKE (233 aa)) is alpha N-terminal domain (alpha-NTD). The interval 268 to 355 (KKKIALKSIF…EIYCYSIFFH (88 aa)) is alpha C-terminal domain (alpha-CTD).

Belongs to the RNA polymerase alpha chain family. In plastids the minimal PEP RNA polymerase catalytic core is composed of four subunits: alpha, beta, beta', and beta''. When a (nuclear-encoded) sigma factor is associated with the core the holoenzyme is formed, which can initiate transcription.

Its subcellular location is the plastid. It is found in the chloroplast. The catalysed reaction is RNA(n) + a ribonucleoside 5'-triphosphate = RNA(n+1) + diphosphate. Its function is as follows. DNA-dependent RNA polymerase catalyzes the transcription of DNA into RNA using the four ribonucleoside triphosphates as substrates. The protein is DNA-directed RNA polymerase subunit alpha of Jasminum nudiflorum (Winter jasmine).